The following is a 450-amino-acid chain: Tubulin alpha chain (450 aa).

Residue Gln11 coordinates GTP. Lys40 bears the N6-acetyllysine mark. 7 residues coordinate GTP: Glu71, Ser140, Gly144, Thr145, Thr179, Asn206, and Asn228. A Mg(2+)-binding site is contributed by Glu71. Glu254 is a catalytic residue.

The protein belongs to the tubulin family. In terms of assembly, dimer of alpha and beta chains. A typical microtubule is a hollow water-filled tube with an outer diameter of 25 nm and an inner diameter of 15 nM. Alpha-beta heterodimers associate head-to-tail to form protofilaments running lengthwise along the microtubule wall with the beta-tubulin subunit facing the microtubule plus end conferring a structural polarity. Microtubules usually have 13 protofilaments but different protofilament numbers can be found in some organisms and specialized cells. It depends on Mg(2+) as a cofactor. Undergoes a tyrosination/detyrosination cycle, the cyclic removal and re-addition of a C-terminal tyrosine residue by the enzymes tubulin tyrosine carboxypeptidase (TTCP) and tubulin tyrosine ligase (TTL), respectively. Post-translationally, acetylation of alpha chains at Lys-40 stabilizes microtubules and affects affinity and processivity of microtubule motors. This modification has a role in multiple cellular functions, ranging from cell motility, cell cycle progression or cell differentiation to intracellular trafficking and signaling.

The protein resides in the cytoplasm. It is found in the cytoskeleton. It carries out the reaction GTP + H2O = GDP + phosphate + H(+). Its function is as follows. Tubulin is the major constituent of microtubules, a cylinder consisting of laterally associated linear protofilaments composed of alpha- and beta-tubulin heterodimers. Microtubules grow by the addition of GTP-tubulin dimers to the microtubule end, where a stabilizing cap forms. Below the cap, tubulin dimers are in GDP-bound state, owing to GTPase activity of alpha-tubulin. This Lepidoglyphus destructor (Storage mite) protein is Tubulin alpha chain.